A 643-amino-acid polypeptide reads, in one-letter code: Threonine--tRNA ligase (643 aa).

The region spanning 1–61 (MPIITLPDGS…SEDATLEIIT (61 aa)) is the TGS domain. Residues 243–534 (DHRKIGKALD…ITEEYAGFFP (292 aa)) are catalytic. Zn(2+) contacts are provided by Cys-334, His-385, and His-511.

This sequence belongs to the class-II aminoacyl-tRNA synthetase family. In terms of assembly, homodimer. Requires Zn(2+) as cofactor.

The protein resides in the cytoplasm. The catalysed reaction is tRNA(Thr) + L-threonine + ATP = L-threonyl-tRNA(Thr) + AMP + diphosphate + H(+). Its function is as follows. Catalyzes the attachment of threonine to tRNA(Thr) in a two-step reaction: L-threonine is first activated by ATP to form Thr-AMP and then transferred to the acceptor end of tRNA(Thr). Also edits incorrectly charged L-seryl-tRNA(Thr). The sequence is that of Threonine--tRNA ligase from Glaesserella parasuis serovar 5 (strain SH0165) (Haemophilus parasuis).